A 377-amino-acid polypeptide reads, in one-letter code: D-alanine--D-alanine ligase (377 aa).

An ATP-grasp domain is found at 140 to 349 (KELLTVNGIR…NAKLVDMLID (210 aa)). 170-225 (VAELGNIVFVKAANQGSSVGISRVTNAEEYTEALSDSFQYDYKVLIEEAVNGAREL) serves as a coordination point for ATP. Mg(2+) contacts are provided by Asp303, Glu316, and Asn318.

This sequence belongs to the D-alanine--D-alanine ligase family. Mg(2+) is required as a cofactor. The cofactor is Mn(2+).

Its subcellular location is the cytoplasm. It carries out the reaction 2 D-alanine + ATP = D-alanyl-D-alanine + ADP + phosphate + H(+). It functions in the pathway cell wall biogenesis; peptidoglycan biosynthesis. Its function is as follows. Cell wall formation. The sequence is that of D-alanine--D-alanine ligase from Leuconostoc mesenteroides subsp. mesenteroides (strain ATCC 8293 / DSM 20343 / BCRC 11652 / CCM 1803 / JCM 6124 / NCDO 523 / NBRC 100496 / NCIMB 8023 / NCTC 12954 / NRRL B-1118 / 37Y).